The primary structure comprises 245 residues: Tetrahydromethanopterin S-methyltransferase subunit A 1 (245 aa).

Residues 1–222 are Cytoplasmic-facing; the sequence is MADKKPAADN…AGNYSGKVQG (222 aa). A 5-hydroxybenzimidazolylcob(I)amide-binding site is contributed by histidine 84. Residues 223 to 243 traverse the membrane as a helical segment; that stretch reads IMIGLIFTLVIGFLLLMAPLL. Residues 244–245 lie on the Extracellular side of the membrane; that stretch reads GA.

The protein belongs to the MtrA family. As to quaternary structure, the complex is composed of 8 subunits; MtrA, MtrB, MtrC, MtrD, MtrE, MtrF, MtrG and MtrH. The cofactor is 5-hydroxybenzimidazolylcob(I)amide.

The protein localises to the cell membrane. The catalysed reaction is 5-methyl-5,6,7,8-tetrahydromethanopterin + coenzyme M + 2 Na(+)(in) = 5,6,7,8-tetrahydromethanopterin + methyl-coenzyme M + 2 Na(+)(out). The protein operates within one-carbon metabolism; methanogenesis from CO(2); methyl-coenzyme M from 5,10-methylene-5,6,7,8-tetrahydromethanopterin: step 2/2. Its function is as follows. Part of a complex that catalyzes the formation of methyl-coenzyme M and tetrahydromethanopterin from coenzyme M and methyl-tetrahydromethanopterin. This is an energy-conserving, sodium-ion translocating step. This Methanobrevibacter ruminantium (strain ATCC 35063 / DSM 1093 / JCM 13430 / OCM 146 / M1) (Methanobacterium ruminantium) protein is Tetrahydromethanopterin S-methyltransferase subunit A 1.